The chain runs to 225 residues: Urease accessory protein UreF (225 aa).

This sequence belongs to the UreF family. As to quaternary structure, ureD, UreF and UreG form a complex that acts as a GTP-hydrolysis-dependent molecular chaperone, activating the urease apoprotein by helping to assemble the nickel containing metallocenter of UreC. The UreE protein probably delivers the nickel.

It localises to the cytoplasm. Required for maturation of urease via the functional incorporation of the urease nickel metallocenter. In Picosynechococcus sp. (strain ATCC 27264 / PCC 7002 / PR-6) (Agmenellum quadruplicatum), this protein is Urease accessory protein UreF.